A 216-amino-acid chain; its full sequence is Large ribosomal subunit protein uL3 (216 aa).

The segment at 135–156 is disordered; that stretch reads LGASHGTQRKHRSPGSIGGCAT.

Belongs to the universal ribosomal protein uL3 family. In terms of assembly, part of the 50S ribosomal subunit. Forms a cluster with proteins L14 and L19.

In terms of biological role, one of the primary rRNA binding proteins, it binds directly near the 3'-end of the 23S rRNA, where it nucleates assembly of the 50S subunit. This Thermobifida fusca (strain YX) protein is Large ribosomal subunit protein uL3.